An 80-amino-acid chain; its full sequence is Large ribosomal subunit protein bL31 (80 aa).

Positions 16, 18, 38, and 41 each coordinate Zn(2+).

Belongs to the bacterial ribosomal protein bL31 family. Type A subfamily. Part of the 50S ribosomal subunit. Requires Zn(2+) as cofactor.

Its function is as follows. Binds the 23S rRNA. In Rhodococcus jostii (strain RHA1), this protein is Large ribosomal subunit protein bL31.